Here is a 320-residue protein sequence, read N- to C-terminus: Olfactory receptor 51E2 (320 aa).

The Extracellular segment spans residues 1 to 24 (MSSCNFTHATFVLIGIPGLEKAHF). N-linked (GlcNAc...) asparagine glycosylation occurs at N5. A helical transmembrane segment spans residues 25–45 (WVGFPLLSMYVVAMFGNCIVV). Residues 46–53 (FIVRTERS) lie on the Cytoplasmic side of the membrane. The chain crosses the membrane as a helical span at residues 54–74 (LHAPMYLFLCMLAAIDLALST). The Extracellular segment spans residues 75 to 98 (STMPKILALFWFDSREISFEACLT). C96 and C178 are joined by a disulfide. The chain crosses the membrane as a helical span at residues 99 to 119 (QMFFIHALSAIESTILLAMAF). Residues 120–138 (DRYVAICHPLRHAAVLNNT) are Cytoplasmic-facing. A helical transmembrane segment spans residues 139-159 (VTAQIGIVAVVRGSLFFFPLP). Residues 160 to 195 (LLIKRLAFCHSNVLSHSYCVHQDVMKLAYADTLPNV) lie on the Extracellular side of the membrane. The helical transmembrane segment at 196–216 (VYGLTAILLVMGVDVMFISLS) threads the bilayer. Topologically, residues 217-236 (YFLIIRTVLQLPSKSERAKA) are cytoplasmic. A helical transmembrane segment spans residues 237–257 (FGTCVSHIGVVLAFYVPLIGL). Over 258-272 (SVVHRFGNSLHPIVR) the chain is Extracellular. A helical membrane pass occupies residues 273 to 293 (VVMGDIYLLLPPVINPIIYGA). At 294-320 (KTKQIRTRVLAMFKISCDKDLQAVGGK) the chain is on the cytoplasmic side.

Belongs to the G-protein coupled receptor 1 family. As to expression, highly expressed in the prostate. Also expressed in spleen, liver, olfactory epithelium, retinal pigment epithelium and medulla oblongata. In the retinal pigment epithelium expression is restricted to the pigment cells and choroid (at protein level). Expressed in epidermal melanocytes (at protein level).

It is found in the cell membrane. It localises to the early endosome membrane. Functionally, olfactory receptor. Activated by the odorant, beta-ionone, a synthetic terpenoid. The activity of this receptor is probably mediated by G-proteins leading to the elevation of intracellular Ca(2+), cAMP and activation of the protein kinases PKA and MAPK3/MAPK1. Stimulation of OR51E2 by beta-ionone affects melanocyte proliferation, differentiation, and melanogenesis. Activation of OR51E2 by beta-ionone increases proliferation and migration of primary retinal pigment epithelial (RPE) cells. Activated also by the short-chain fatty acids (SCFA) acetate and propionate. In response to SCFA, may positively regulate renin secretion and increase blood pressure. May also be activated by steroid hormones and regulate cell proliferation. Activated by L-lactate in glomus cells. This Homo sapiens (Human) protein is Olfactory receptor 51E2.